Here is a 143-residue protein sequence, read N- to C-terminus: Lutropin subunit beta (143 aa).

Positions Met-1–Thr-22 are cleaved as a signal peptide. Disulfide bonds link Cys-31–Cys-79, Cys-45–Cys-94, Cys-48–Cys-132, Cys-56–Cys-110, Cys-60–Cys-112, and Cys-115–Cys-122. Asn-35 carries an N-linked (GlcNAc...) asparagine glycan.

The protein belongs to the glycoprotein hormones subunit beta family. As to quaternary structure, heterodimer of a common alpha chain and a unique beta chain which confers biological specificity to thyrotropin, lutropin, follitropin and gonadotropin.

It is found in the secreted. Promotes spermatogenesis and ovulation by stimulating the testes and ovaries to synthesize steroids. The polypeptide is Lutropin subunit beta (LHB) (Felis catus (Cat)).